A 430-amino-acid polypeptide reads, in one-letter code: Glutamate-1-semialdehyde 2,1-aminomutase (430 aa).

Lys-267 is modified (N6-(pyridoxal phosphate)lysine).

This sequence belongs to the class-III pyridoxal-phosphate-dependent aminotransferase family. HemL subfamily. In terms of assembly, homodimer. The cofactor is pyridoxal 5'-phosphate.

The protein localises to the cytoplasm. The enzyme catalyses (S)-4-amino-5-oxopentanoate = 5-aminolevulinate. The protein operates within porphyrin-containing compound metabolism; protoporphyrin-IX biosynthesis; 5-aminolevulinate from L-glutamyl-tRNA(Glu): step 2/2. This Cytophaga hutchinsonii (strain ATCC 33406 / DSM 1761 / CIP 103989 / NBRC 15051 / NCIMB 9469 / D465) protein is Glutamate-1-semialdehyde 2,1-aminomutase.